The chain runs to 213 residues: Uridine kinase (213 aa).

15 to 22 (GASASGKS) serves as a coordination point for ATP.

Belongs to the uridine kinase family.

It is found in the cytoplasm. The enzyme catalyses uridine + ATP = UMP + ADP + H(+). It carries out the reaction cytidine + ATP = CMP + ADP + H(+). It functions in the pathway pyrimidine metabolism; CTP biosynthesis via salvage pathway; CTP from cytidine: step 1/3. The protein operates within pyrimidine metabolism; UMP biosynthesis via salvage pathway; UMP from uridine: step 1/1. This Proteus mirabilis (strain HI4320) protein is Uridine kinase.